The sequence spans 190 residues: Protein LZIC (190 aa).

A coiled-coil region spans residues 6–64; that stretch reads KSETSKLRQNMEEQLDRLMQQLQDLEECREDLEEEEYEETKKETLEQLSEFNDSLKKLM.

It belongs to the CTNNBIP1 family. Does not interact with CTNNB1.

Its function is as follows. Required for neuronal survival during early development. This chain is Protein LZIC (lzic), found in Danio rerio (Zebrafish).